Consider the following 188-residue polypeptide: Apolipoprotein M (188 aa).

Residues 1–22 constitute a signal peptide (not cleaved); sequence MFHQIWAALLYLYGILLNSIYQ. Intrachain disulfides connect cysteine 23–cysteine 167, cysteine 95–cysteine 183, and cysteine 128–cysteine 157. Tetradecanoate-binding residues include glutamate 136 and arginine 143.

Belongs to the calycin superfamily. Lipocalin family. Highly divergent. As to quaternary structure, interacts with LRP2; LRP2 mediates APOM renal uptake and subsequent lysosomal degradation.

The protein resides in the secreted. Probably involved in lipid transport. Can bind sphingosine-1-phosphate, myristic acid, palmitic acid and stearic acid, retinol, all-trans-retinoic acid and 9-cis-retinoic acid. The sequence is that of Apolipoprotein M (APOM) from Sus scrofa (Pig).